Here is a 348-residue protein sequence, read N- to C-terminus: Protein RecA (348 aa).

71–78 (GVESSGKT) is a binding site for ATP.

The protein belongs to the RecA family.

Its subcellular location is the cytoplasm. Its function is as follows. Can catalyze the hydrolysis of ATP in the presence of single-stranded DNA, the ATP-dependent uptake of single-stranded DNA by duplex DNA, and the ATP-dependent hybridization of homologous single-stranded DNAs. It interacts with LexA causing its activation and leading to its autocatalytic cleavage. This is Protein RecA from Aquifex pyrophilus.